The following is a 237-amino-acid chain: Dihydroceramide fatty acyl 2-hydroxylase FAH1 (237 aa).

2 helical membrane passes run leucine 50–isoleucine 70 and leucine 80–valine 100. Residues histidine 102, histidine 107, histidine 123, histidine 126, and histidine 127 each coordinate Zn(2+). The next 2 helical transmembrane spans lie at valine 137 to isoleucine 157 and proline 164 to leucine 184. The Zn(2+) site is built by histidine 181, histidine 185, histidine 201, histidine 204, and histidine 205.

Belongs to the sterol desaturase family. Interacts with CYTB5-A, CYTB5-B, CYTB5-C and CYTB5-D. Interacts indirectly with BI-1 via CYTB5-D. Zn(2+) serves as cofactor. In terms of tissue distribution, expressed in leaves, roots, flowers and seeds.

It is found in the endoplasmic reticulum membrane. The catalysed reaction is an N-(1,2-saturated acyl)sphinganine + 2 Fe(II)-[cytochrome b5] + O2 + 2 H(+) = an N-[(2'R)-hydroxyacyl]sphinganine + 2 Fe(III)-[cytochrome b5] + H2O. In terms of biological role, fatty acid 2-hydroxylase involved in the alpha-hydroxylation of sphingolipid-associated very long-chain fatty acids (VLCFA). Probably involved in the resistance response to oxidative stress. The chain is Dihydroceramide fatty acyl 2-hydroxylase FAH1 from Arabidopsis thaliana (Mouse-ear cress).